A 311-amino-acid polypeptide reads, in one-letter code: 4-diphosphocytidyl-2-C-methyl-D-erythritol kinase (311 aa).

Lys10 is a catalytic residue. Pro105 to Ala115 lines the ATP pocket. The active site involves Asp146.

It belongs to the GHMP kinase family. IspE subfamily.

The enzyme catalyses 4-CDP-2-C-methyl-D-erythritol + ATP = 4-CDP-2-C-methyl-D-erythritol 2-phosphate + ADP + H(+). The protein operates within isoprenoid biosynthesis; isopentenyl diphosphate biosynthesis via DXP pathway; isopentenyl diphosphate from 1-deoxy-D-xylulose 5-phosphate: step 3/6. Functionally, catalyzes the phosphorylation of the position 2 hydroxy group of 4-diphosphocytidyl-2C-methyl-D-erythritol. In Corynebacterium glutamicum (strain ATCC 13032 / DSM 20300 / JCM 1318 / BCRC 11384 / CCUG 27702 / LMG 3730 / NBRC 12168 / NCIMB 10025 / NRRL B-2784 / 534), this protein is 4-diphosphocytidyl-2-C-methyl-D-erythritol kinase.